A 350-amino-acid polypeptide reads, in one-letter code: Protein FAM118B (350 aa).

Alanine 2 bears the N-acetylalanine mark. Serine 9 bears the Phosphoserine mark. The disordered stretch occupies residues 330 to 350 (AREGQLNGSSAAHGEIRGCST).

The protein belongs to the FAM118 family.

It localises to the nucleus. The protein resides in the cajal body. Its function is as follows. May play a role in Cajal bodies formation. The polypeptide is Protein FAM118B (Fam118b) (Rattus norvegicus (Rat)).